Reading from the N-terminus, the 437-residue chain is Adenylosuccinate synthetase (437 aa).

Residues 12–18 (GDEGKGK) and 40–42 (GHT) contribute to the GTP site. Residue Asp-13 is the Proton acceptor of the active site. Mg(2+) is bound by residues Asp-13 and Gly-40. IMP is bound by residues 13 to 16 (DEGK), 38 to 41 (NAGH), Thr-128, Arg-142, Gln-223, Thr-238, and Arg-302. His-41 serves as the catalytic Proton donor. A disordered region spans residues 119–138 (QRGERRIGTTGRGIGPTYAD). 298-304 (TTTGRRR) lines the substrate pocket. Residues Arg-304, 330–332 (KLD), and 412–414 (SLG) contribute to the GTP site.

The protein belongs to the adenylosuccinate synthetase family. In terms of assembly, homodimer. The cofactor is Mg(2+).

It localises to the cytoplasm. The catalysed reaction is IMP + L-aspartate + GTP = N(6)-(1,2-dicarboxyethyl)-AMP + GDP + phosphate + 2 H(+). It functions in the pathway purine metabolism; AMP biosynthesis via de novo pathway; AMP from IMP: step 1/2. Plays an important role in the de novo pathway of purine nucleotide biosynthesis. Catalyzes the first committed step in the biosynthesis of AMP from IMP. This chain is Adenylosuccinate synthetase, found in Synechococcus sp. (strain WH7803).